The following is a 311-amino-acid chain: Ribosomal RNA small subunit methyltransferase H 1 (311 aa).

Residues 33–35, Asp-53, Phe-80, Asp-101, and Gln-108 contribute to the S-adenosyl-L-methionine site; that span reads AGH.

It belongs to the methyltransferase superfamily. RsmH family.

Its subcellular location is the cytoplasm. The enzyme catalyses cytidine(1402) in 16S rRNA + S-adenosyl-L-methionine = N(4)-methylcytidine(1402) in 16S rRNA + S-adenosyl-L-homocysteine + H(+). Functionally, specifically methylates the N4 position of cytidine in position 1402 (C1402) of 16S rRNA. The sequence is that of Ribosomal RNA small subunit methyltransferase H 1 from Alkaliphilus metalliredigens (strain QYMF).